A 211-amino-acid chain; its full sequence is Large ribosomal subunit protein mL48 (211 aa).

The N-terminal 27 residues, 1-27, are a transit peptide targeting the mitochondrion; that stretch reads MSGTLGKVLGVWTNTVSKQGFSLLRFR. Lysine 198 carries the post-translational modification N6-succinyllysine.

This sequence belongs to the mitochondrion-specific ribosomal protein mL48 family. As to quaternary structure, component of the mitochondrial ribosome large subunit (39S) which comprises a 16S rRNA and about 50 distinct proteins. Interacts with OXA1L.

The protein localises to the mitochondrion. The protein is Large ribosomal subunit protein mL48 (Mrpl48) of Mus musculus (Mouse).